Here is a 300-residue protein sequence, read N- to C-terminus: Ribosomal RNA small subunit methyltransferase H (300 aa).

S-adenosyl-L-methionine-binding positions include 33–35 (AGH), Asp52, Phe86, Asp97, and Gln104.

This sequence belongs to the methyltransferase superfamily. RsmH family.

The protein resides in the cytoplasm. It carries out the reaction cytidine(1402) in 16S rRNA + S-adenosyl-L-methionine = N(4)-methylcytidine(1402) in 16S rRNA + S-adenosyl-L-homocysteine + H(+). Specifically methylates the N4 position of cytidine in position 1402 (C1402) of 16S rRNA. This chain is Ribosomal RNA small subunit methyltransferase H, found in Aliarcobacter butzleri (strain RM4018) (Arcobacter butzleri).